Here is a 137-residue protein sequence, read N- to C-terminus: Large ribosomal subunit protein uL16 (137 aa).

It belongs to the universal ribosomal protein uL16 family. In terms of assembly, part of the 50S ribosomal subunit.

In terms of biological role, binds 23S rRNA and is also seen to make contacts with the A and possibly P site tRNAs. The sequence is that of Large ribosomal subunit protein uL16 from Acinetobacter baumannii (strain SDF).